The chain runs to 474 residues: MTKKLHIKTWGCQMNEYDSSKMADLLDATHGYQLTDVAEEADVLLLNTCSIREKAQEKVFHQLGRWRLLKEKNPDLIIGVGGCVASQEGEHIRQRAHYVDIIFGPQTLHRLPEMINSVRGDRSPVVDISFPEIEKFDRLPEPRAEGPTAFVSIMEGCNKYCTYCVVPYTRGEEVSRPSDDILFEIAQLAAQGVREVNLLGQNVNAWRGENYDGTTGTFADLLRLVAAIDGIDRIRFTTSHPIEFTDDIIEVYRDTPELVSFLHLPVQSGSDRVLNLMGRTHTALEYKAIIRKLRAARPDIQISSDFIVGFPGETTDDFEKTMKLIADVNFDMSYSFIFSARPGTPAADMVDDVPEEEKKQRLYILQERINQQAMAWSRRMLGTTQRILVEGTSRKNIMELSGRTENNRVVNFEGTPEMIGKFVDVEITDVYPNSLRGKVVRTEDEMGLRVAETPESVIARTRKENELGVGFYQP.

The MTTase N-terminal domain maps to 3–120 (KKLHIKTWGC…LPEMINSVRG (118 aa)). Positions 12, 49, 83, 157, 161, and 164 each coordinate [4Fe-4S] cluster. One can recognise a Radical SAM core domain in the interval 143-375 (RAEGPTAFVS…QERINQQAMA (233 aa)). In terms of domain architecture, TRAM spans 378-441 (RRMLGTTQRI…PNSLRGKVVR (64 aa)).

This sequence belongs to the methylthiotransferase family. MiaB subfamily. Monomer. It depends on [4Fe-4S] cluster as a cofactor.

It localises to the cytoplasm. It catalyses the reaction N(6)-dimethylallyladenosine(37) in tRNA + (sulfur carrier)-SH + AH2 + 2 S-adenosyl-L-methionine = 2-methylsulfanyl-N(6)-dimethylallyladenosine(37) in tRNA + (sulfur carrier)-H + 5'-deoxyadenosine + L-methionine + A + S-adenosyl-L-homocysteine + 2 H(+). The enzyme catalyses N(6)-dimethylallyladenosine(37) in tRNA + (sulfur carrier)-SH + AH2 + S-adenosyl-L-methionine = 2-thio-N(6)-dimethylallyladenosine(37) in tRNA + (sulfur carrier)-H + 5'-deoxyadenosine + L-methionine + A + H(+). The catalysed reaction is 2-thio-N(6)-dimethylallyladenosine(37) in tRNA + S-adenosyl-L-methionine = 2-methylsulfanyl-N(6)-dimethylallyladenosine(37) in tRNA + S-adenosyl-L-homocysteine + H(+). Its function is as follows. Catalyzes the methylthiolation of N6-(dimethylallyl)adenosine (i(6)A), leading to the formation of 2-methylthio-N6-(dimethylallyl)adenosine (ms(2)i(6)A) at position 37 in tRNAs that read codons beginning with uridine. The polypeptide is tRNA-2-methylthio-N(6)-dimethylallyladenosine synthase (Salmonella typhimurium (strain LT2 / SGSC1412 / ATCC 700720)).